Consider the following 488-residue polypeptide: Ankyrin repeat domain-containing protein 13C (488 aa).

The tract at residues 1-60 is disordered; that stretch reads MTGEKIRSVRKERKSGLDLLEPDEEPAATGPAKHRGSKIFSGGNHRISRSSSSPGDPDGA. Positions 41 to 59 are enriched in low complexity; it reads SGGNHRISRSSSSPGDPDG. ANK repeat units lie at residues 58-87, 90-119, and 123-152; these read DGAY…IAQK, HGNT…PVKV, and QGWS…QQSR.

It localises to the endoplasmic reticulum membrane. Acts as a molecular chaperone for G protein-coupled receptors, regulating their biogenesis and exit from the ER. The polypeptide is Ankyrin repeat domain-containing protein 13C (ankrd13c) (Danio rerio (Zebrafish)).